Reading from the N-terminus, the 409-residue chain is Forkhead box protein A2 (409 aa).

Positions A150 to L241 form a DNA-binding region, fork-head. Over residues D250–S262 the composition is skewed to basic and acidic residues. A disordered region spans residues D250–H315. Residues E263–N286 show a composition bias toward low complexity.

It is found in the nucleus. Its function is as follows. May play a crucial role in specification of both the axial mesendoderm and the ventral nervous system. The polypeptide is Forkhead box protein A2 (foxa2) (Danio rerio (Zebrafish)).